Here is a 128-residue protein sequence, read N- to C-terminus: Large ribosomal subunit protein uL22 (128 aa).

The tract at residues 1 to 22 (MARGHRSQIKRERNANKDTRPS) is disordered. Positions 9-21 (IKRERNANKDTRP) are enriched in basic and acidic residues.

Belongs to the universal ribosomal protein uL22 family. Part of the 50S ribosomal subunit.

This protein binds specifically to 23S rRNA; its binding is stimulated by other ribosomal proteins, e.g. L4, L17, and L20. It is important during the early stages of 50S assembly. It makes multiple contacts with different domains of the 23S rRNA in the assembled 50S subunit and ribosome. Its function is as follows. The globular domain of the protein is located near the polypeptide exit tunnel on the outside of the subunit, while an extended beta-hairpin is found that lines the wall of the exit tunnel in the center of the 70S ribosome. In Lachnoclostridium phytofermentans (strain ATCC 700394 / DSM 18823 / ISDg) (Clostridium phytofermentans), this protein is Large ribosomal subunit protein uL22.